The chain runs to 167 residues: uncharacterized protein (167 aa).

A compositionally biased stretch (basic residues) spans Met1–Arg10. The disordered stretch occupies residues Met1–Glu23.

This is an uncharacterized protein from Sinorhizobium fredii (strain NBRC 101917 / NGR234).